The chain runs to 427 residues: UBX domain-containing protein 10 (427 aa).

Residues 247 to 311 (LERFRSEREA…VQKKKKQYRA (65 aa)) adopt a coiled-coil conformation. In terms of domain architecture, UBX spans 323 to 425 (SEDEPARLSI…FPNGTVVVEL (103 aa)).

The protein localises to the endoplasmic reticulum. Its function is as follows. Involved in protein degradation through the ubiquitin/proteasome pathway. In Schizosaccharomyces pombe (strain 972 / ATCC 24843) (Fission yeast), this protein is UBX domain-containing protein 10 (ucp10).